The sequence spans 1096 residues: Serine-repeat antigen protein 3 (1096 aa).

An N-terminal signal peptide occupies residues 1-21; sequence MARLSSIVFIICLLLCNNAIS. A disordered region spans residues 28 to 205; sequence PSSGGTLSGG…RSPPPQVNNI (178 aa). Low complexity predominate over residues 77–97; sequence NSDSTGDSSLGSTGSNGSQPA. Residue Asn92 is glycosylated (N-linked (GlcNAc...) asparagine). Residues 102 to 113 are compositionally biased toward basic and acidic residues; that stretch reads KEPEPTTPKEPE. The span at 123 to 147 shows a compositional bias: polar residues; the sequence is VTPQKTAETASGKQVSPTPSENPPS. The span at 149–161 shows a compositional bias: basic and acidic residues; it reads DTPKPESSSEKKV. 8 N-linked (GlcNAc...) asparagine glycosylation sites follow: Asn204, Asn607, Asn637, Asn662, Asn671, Asn712, Asn892, and Asn951. 2 disordered regions span residues 916-952 and 964-1006; these read EAKN…QANS and NQRT…ASAN. Polar residues-rich tracts occupy residues 925–952 and 964–975; these read QNYG…QANS and NQRTADSNPNAQ. Residues 976 to 1006 show a composition bias toward low complexity; the sequence is STPSPNTTVTDTVNSNTANSNTANSNTASAN. Asn981 and Asn1039 each carry an N-linked (GlcNAc...) asparagine glycan.

This sequence belongs to the peptidase C1 family. Proteolytically cleaved in both blood and liver stage parasites. Precursor of 130 kDa is processed into 72 kDa and 55 kDa forms. Proteolytically cleaved by SUB1.

The protein resides in the cell membrane. Its subcellular location is the parasitophorous vacuole. The protein localises to the secreted. It localises to the host cytoplasm. In terms of biological role, putative cysteine protease. Probably involved in merozoite release from the parasitophorous vacuole during liver stages. The polypeptide is Serine-repeat antigen protein 3 (Plasmodium berghei (strain Anka)).